Consider the following 430-residue polypeptide: Adenylosuccinate synthetase (430 aa).

GTP-binding positions include 12–18 (GDEGKGK) and 40–42 (GHT). Asp-13 serves as the catalytic Proton acceptor. 2 residues coordinate Mg(2+): Asp-13 and Gly-40. Residues 13-16 (DEGK), 38-41 (NAGH), Thr-130, Arg-144, Gln-224, Thr-239, and Arg-303 contribute to the IMP site. Residue His-41 is the Proton donor of the active site. 299-305 (TVTGRKR) lines the substrate pocket. GTP-binding positions include Arg-305, 331 to 333 (KLD), and 413 to 415 (STS).

It belongs to the adenylosuccinate synthetase family. Homodimer. Mg(2+) is required as a cofactor.

The protein localises to the cytoplasm. It catalyses the reaction IMP + L-aspartate + GTP = N(6)-(1,2-dicarboxyethyl)-AMP + GDP + phosphate + 2 H(+). Its pathway is purine metabolism; AMP biosynthesis via de novo pathway; AMP from IMP: step 1/2. Plays an important role in the de novo pathway of purine nucleotide biosynthesis. Catalyzes the first committed step in the biosynthesis of AMP from IMP. In Cereibacter sphaeroides (strain ATCC 17025 / ATH 2.4.3) (Rhodobacter sphaeroides), this protein is Adenylosuccinate synthetase.